Consider the following 221-residue polypeptide: Ras-related protein Rab-27A (221 aa).

An N-acetylserine modification is found at Ser2. The residue at position 2 (Ser2) is a Phosphoserine. 16-24 (GDSGVGKTS) is a binding site for GTP. The Effector region motif lies at 38–46 (FITTVGIDF). Residues 74–78 (DTAGQ), 133–136 (NKSD), and 163–165 (SAA) contribute to the GTP site. A disulfide bond links Cys123 and Cys188. The disordered stretch occupies residues 202-221 (NGHTSADPLNEEKEKGSCGC). Basic and acidic residues predominate over residues 211 to 221 (NEEKEKGSCGC). Residues Cys219 and Cys221 are each lipidated (S-geranylgeranyl cysteine). Position 221 is a cysteine methyl ester (Cys221).

This sequence belongs to the small GTPase superfamily. Rab family. Binds SYTL1, SLAC2B, MYRIP, SYTL3, SYTL4 and SYTL5. Interacts with RPH3A and RPH3A. Binds MLPH and SYTL2. Interacts with UNC13D. Does not interact with the BLOC-3 complex (heterodimer of HPS1 and HPS4). Interacts (GDP-bound form preferentially) with DENND10.

It is found in the membrane. The protein localises to the melanosome. The protein resides in the late endosome. It localises to the lysosome. It carries out the reaction GTP + H2O = GDP + phosphate + H(+). Its activity is regulated as follows. Regulated by guanine nucleotide exchange factors (GEFs) which promote the exchange of bound GDP for free GTP, GTPase activating proteins (GAPs) which increase the GTP hydrolysis activity, and GDP dissociation inhibitors which inhibit the dissociation of the nucleotide from the GTPase. Activated by GEFs such as DENND10. Functionally, small GTPase which cycles between active GTP-bound and inactive GDP-bound states. In its active state, binds to a variety of effector proteins to regulate homeostasis of late endocytic pathway, including endosomal positioning, maturation and secretion. Plays a role in cytotoxic granule exocytosis in lymphocytes. Required for both granule maturation and granule docking and priming at the immunologic synapse. This Sus scrofa (Pig) protein is Ras-related protein Rab-27A (RAB27A).